The chain runs to 120 residues: MPRVKNAVVARKRHKKVLKLAKGYWGAKSKLYRVANQQVMRSLLYAYRDRRAKKRDFRRLWITRINAAARLNGMSYNRFIEGLRRAGVEINRKVLAELAVKDQAAFGQLVQVAKAQLESK.

It belongs to the bacterial ribosomal protein bL20 family.

Its function is as follows. Binds directly to 23S ribosomal RNA and is necessary for the in vitro assembly process of the 50S ribosomal subunit. It is not involved in the protein synthesizing functions of that subunit. This chain is Large ribosomal subunit protein bL20, found in Desulforudis audaxviator (strain MP104C).